We begin with the raw amino-acid sequence, 983 residues long: Polyhomeotic-like protein 3 (983 aa).

Disordered stretches follow at residues Met1–Pro34, Leu103–Ser149, Val225–Thr283, Leu313–Gln332, Leu339–Pro410, Pro477–Pro509, and Asp601–Ile620. Low complexity-rich tracts occupy residues Thr9 to Ser29 and Leu103 to Ser126. Over residues Ile127–Ile139 the composition is skewed to polar residues. Residues Ser140–Ser149 are compositionally biased toward low complexity. Polar residues predominate over residues Val225 to Ile257. Over residues Ser258–Glu271 the composition is skewed to basic and acidic residues. A phosphoserine mark is found at Ser263 and Ser272. Residues Ser274–Thr283 are compositionally biased toward polar residues. Ser315 bears the Phosphoserine mark. Polar residues predominate over residues Ser365 to Thr383. Residues Val384–Val398 are compositionally biased toward low complexity. The segment covering Pro477 to Tyr489 has biased composition (polar residues). Over residues Ser490–Ser506 the composition is skewed to low complexity. Phosphothreonine occurs at positions 609 and 614. A Phosphoserine modification is found at Ser616. Residues Lys691 and Lys732 each participate in a glycyl lysine isopeptide (Lys-Gly) (interchain with G-Cter in SUMO2) cross-link. The HD1 signature appears at Lys691–Val720. A phosphoserine mark is found at Ser761 and Ser762. Residues Glu776–Lys810 form an FCS-type zinc finger. The Zn(2+) site is built by Cys785, Cys788, Cys804, and Cys808. A Glycyl lysine isopeptide (Lys-Gly) (interchain with G-Cter in SUMO2) cross-link involves residue Lys810. Disordered stretches follow at residues Arg827–Ala847 and Glu864–Glu889. Positions Trp919 to Ser983 constitute an SAM domain.

Component of a PRC1-like complex.

The protein resides in the nucleus. In terms of biological role, component of a Polycomb group (PcG) multiprotein PRC1-like complex, a complex class required to maintain the transcriptionally repressive state of many genes, including Hox genes, throughout development. PcG PRC1 complex acts via chromatin remodeling and modification of histones; it mediates monoubiquitination of histone H2A 'Lys-119', rendering chromatin heritably changed in its expressibility. This chain is Polyhomeotic-like protein 3 (PHC3), found in Homo sapiens (Human).